We begin with the raw amino-acid sequence, 336 residues long: Pentalenene synthase (336 aa).

The Mg(2+) site is built by aspartate 80, aspartate 84, asparagine 219, serine 223, and glutamate 227. The DDXXD motif signature appears at 80-84 (DDLFD).

This sequence belongs to the terpene synthase family. As to quaternary structure, monomer. Mg(2+) is required as a cofactor.

It carries out the reaction (2E,6E)-farnesyl diphosphate = pentalenene + diphosphate. It functions in the pathway antibiotic biosynthesis; neopentalenolactone biosynthesis. Functionally, catalyzes the cyclization of farnesyl diphosphate (FPP) to the tricyclic sesquiterpene pentalenene in the biosynthesis of neopentalenolactone antibiotic. The protein is Pentalenene synthase (ptlA) of Streptomyces avermitilis (strain ATCC 31267 / DSM 46492 / JCM 5070 / NBRC 14893 / NCIMB 12804 / NRRL 8165 / MA-4680).